Here is a 463-residue protein sequence, read N- to C-terminus: MSNKMWGGRFSERPDEIMEDINVSIDVDRHLYAQDIAASKAHAAMLAAQGIITASDAKNIGKGLDTILSEITKGAFEFKRALEDIHMNVESRLGELIGPAAGRLHTARSRNDQVATDFRLYVRDTIDDIDAALAAYQHALASRALDHAGTVMPGFTHLQTAQPVTFGHHLLAYVEMAGRDRGRFADARKRLNESPLGAAALAGTSFPIDRHATAEALGFERPMANSLDAVSDRDFVLETLSAASICAVHLSRFAEEIVIWTSPLVGLIKLSDKFTTGSSIMPQKRNPDAAELVRAKTGRVIGALNALLIVMKGLPLAYQKDMQEDKQGAMEAFAALSLAIRAMTGMALDLVPDEARMKAAAGEGYATATDLADWLVRTLKMPFREAHHVTGRIVALASKQGVALHELPLSAMQQVEPKITADVLGVLSVESSVKSRTSFGGTAPKNVASQAKGWLKRLEKQRK.

This sequence belongs to the lyase 1 family. Argininosuccinate lyase subfamily.

It localises to the cytoplasm. The enzyme catalyses 2-(N(omega)-L-arginino)succinate = fumarate + L-arginine. Its pathway is amino-acid biosynthesis; L-arginine biosynthesis; L-arginine from L-ornithine and carbamoyl phosphate: step 3/3. The sequence is that of Argininosuccinate lyase from Bradyrhizobium sp. (strain BTAi1 / ATCC BAA-1182).